The chain runs to 159 residues: NADH-quinone oxidoreductase subunit B (159 aa).

[4Fe-4S] cluster contacts are provided by cysteine 37, cysteine 38, cysteine 102, and cysteine 132.

Belongs to the complex I 20 kDa subunit family. In terms of assembly, NDH-1 is composed of 14 different subunits. Subunits NuoB, C, D, E, F, and G constitute the peripheral sector of the complex. [4Fe-4S] cluster serves as cofactor.

The protein resides in the cell inner membrane. The enzyme catalyses a quinone + NADH + 5 H(+)(in) = a quinol + NAD(+) + 4 H(+)(out). Its function is as follows. NDH-1 shuttles electrons from NADH, via FMN and iron-sulfur (Fe-S) centers, to quinones in the respiratory chain. The immediate electron acceptor for the enzyme in this species is believed to be ubiquinone. Couples the redox reaction to proton translocation (for every two electrons transferred, four hydrogen ions are translocated across the cytoplasmic membrane), and thus conserves the redox energy in a proton gradient. In Variovorax paradoxus (strain S110), this protein is NADH-quinone oxidoreductase subunit B.